A 433-amino-acid polypeptide reads, in one-letter code: UDP-N-acetylglucosamine 1-carboxyvinyltransferase (433 aa).

22-23 serves as a coordination point for phosphoenolpyruvate; that stretch reads KN. UDP-N-acetyl-alpha-D-glucosamine is bound at residue R96. Residue C120 is the Proton donor of the active site. C120 bears the 2-(S-cysteinyl)pyruvic acid O-phosphothioketal mark. Residues 125 to 129, D308, and I330 each bind UDP-N-acetyl-alpha-D-glucosamine; that span reads RPIDL.

It belongs to the EPSP synthase family. MurA subfamily.

The protein resides in the cytoplasm. The enzyme catalyses phosphoenolpyruvate + UDP-N-acetyl-alpha-D-glucosamine = UDP-N-acetyl-3-O-(1-carboxyvinyl)-alpha-D-glucosamine + phosphate. It functions in the pathway cell wall biogenesis; peptidoglycan biosynthesis. Its function is as follows. Cell wall formation. Adds enolpyruvyl to UDP-N-acetylglucosamine. The protein is UDP-N-acetylglucosamine 1-carboxyvinyltransferase of Koribacter versatilis (strain Ellin345).